The following is a 603-amino-acid chain: MAMYTTMAILTLTSLIPPITATLINPNKKNLYPHYVKMTIASTFMISLFPTMMFMCTDQETIISNWHWTATQTLELSLSFKLDYFSMMFIPIALFVTWSIMEFSLWYMHSDPNINQFFKYLLIFLTTMLILVTANNLFQLFIGWEGVGIMSFLLIGWWHAREEANTAAIQAILYNRIGDIGFILALAWFLLHTNSWEPQQMILLNSNPNFLPLAGLLLAARGKSAQLGLHPWLPSAMEGPTPVSALLHSSTMVVAGVFLLIRFHPLTENNQLIQTLTLCLGAITTLFTAICALTQNDIKKIVAFSTSSQLGLMVVTIGINQPYLAFLHICTHAFFKAMLFMCSGSIIHNLNNEQDIRKMGGLFKTLPLTSTSLTIGSLALTGMPFLTGFYSKDLIIETANMSYTNAWALSTTLIATSLTSAYSTRMILLTLTNRPRFPTLTNINENNPTLLNPIKRLTIGSLLAGFLIINSIPPTSPSQTTIPLYLKLTALSITLLGFLTAFDLHLLTNKLKMKNPSHTFHFSNMLGFYPNTIHRTIPYASLTMSQNLASLLLDLAWLEKLMPKTISHHQISASVTISSQKGMIKLYSLSLLIPLSLTLLLIM.

The next 16 membrane-spanning stretches (helical) occupy residues 4–24 (YTTM…ATLI), 36–56 (VKMT…MFMC), 87–107 (MMFI…SLWY), 114–134 (INQF…LVTA), 137–157 (LFQL…LIGW), 171–191 (AILY…WFLL), 200–220 (QMIL…LLAA), 241–261 (TPVS…FLLI), 272–292 (LIQT…AICA), 301–320 (IVAF…IGIN), 325–347 (AFLH…GSII), 366–386 (LPLT…MPFL), 407–429 (WALS…MILL), 457–477 (LTIG…PTSP), 482–502 (IPLY…LTAF), and 583–603 (MIKL…LLIM).

This sequence belongs to the complex I subunit 5 family. As to quaternary structure, core subunit of respiratory chain NADH dehydrogenase (Complex I) which is composed of 45 different subunits.

It localises to the mitochondrion inner membrane. It carries out the reaction a ubiquinone + NADH + 5 H(+)(in) = a ubiquinol + NAD(+) + 4 H(+)(out). Functionally, core subunit of the mitochondrial membrane respiratory chain NADH dehydrogenase (Complex I) which catalyzes electron transfer from NADH through the respiratory chain, using ubiquinone as an electron acceptor. Essential for the catalytic activity and assembly of complex I. In Hylobates lar (Lar gibbon), this protein is NADH-ubiquinone oxidoreductase chain 5 (MT-ND5).